A 346-amino-acid chain; its full sequence is Annexin A1 (346 aa).

Ala2 is modified (N-acetylalanine). Ser5 carries the phosphoserine; by TRPM7 modification. Gln19 participates in a covalent cross-link: Isoglutamyl lysine isopeptide (Gln-Lys) (interchain with K-?). At Tyr21 the chain carries Phosphotyrosine; by EGFR. Ser27 carries the post-translational modification Phosphoserine; by PKC. Ser34 and Ser37 each carry phosphoserine. Annexin repeat units follow at residues 42–113 (FNPS…AMLK), 114–185 (TPAQ…ALAK), 197–269 (DLAD…TIVK), and 273–344 (STPA…ALCG). At Lys58 the chain carries N6-acetyllysine. Ca(2+)-binding residues include Gly59, Val60, Glu62, Lys97, Leu100, Glu105, Met127, Gly129, Gly131, Thr132, and Glu134. At Thr136 the chain carries Phosphothreonine. Residues Asp171, Gly210, and Arg213 each contribute to the Ca(2+) site. A Glycyl lysine isopeptide (Lys-Gly) (interchain with G-Cter in SUMO1); alternate cross-link involves residue Lys214. A Glycyl lysine isopeptide (Lys-Gly) (interchain with G-Cter in SUMO2); alternate cross-link involves residue Lys214. 4 residues coordinate Ca(2+): Gly215, Asp253, Glu255, and Leu256. Lys257 is covalently cross-linked (Glycyl lysine isopeptide (Lys-Gly) (interchain with G-Cter in SUMO1)). 4 residues coordinate Ca(2+): Glu261, Met286, Gly288, and Gly290. Lys312 carries the N6-acetyllysine modification. An intrachain disulfide couples Cys324 to Cys343. The Ca(2+) site is built by Leu328, Glu330, and Thr331. Lys332 is covalently cross-linked (Glycyl lysine isopeptide (Lys-Gly) (interchain with G-Cter in SUMO1)). A Ca(2+)-binding site is contributed by Glu336.

The protein belongs to the annexin family. As to quaternary structure, homodimer; non-covalently linked. Homodimer; linked by transglutamylation. Homodimers linked by transglutamylation are observed in placenta, but not in other tissues. Interacts with S100A11. Heterotetramer, formed by two molecules each of S100A11 and ANXA1. Interacts with DYSF. Interacts with EGFR. Phosphorylated by protein kinase C, EGFR and TRPM7. Phosphorylated in response to EGF treatment. Post-translationally, sumoylated. In terms of processing, proteolytically cleaved by cathepsin CTSG to release the active N-terminal peptide Ac2-26. As to expression, detected in eosinophils. Detected in lung, placenta, spleen and thymus (at protein level).

It is found in the nucleus. The protein resides in the cytoplasm. Its subcellular location is the cell projection. The protein localises to the cilium. It localises to the basolateral cell membrane. It is found in the lateral cell membrane. The protein resides in the cell membrane. Its subcellular location is the apical cell membrane. The protein localises to the membrane. It localises to the endosome membrane. It is found in the secreted. The protein resides in the extracellular space. Its subcellular location is the early endosome. The protein localises to the cytoplasmic vesicle membrane. It localises to the extracellular exosome. It is found in the cytoplasmic vesicle. The protein resides in the secretory vesicle lumen. Its subcellular location is the phagocytic cup. Its function is as follows. Plays important roles in the innate immune response as effector of glucocorticoid-mediated responses and regulator of the inflammatory process. Has anti-inflammatory activity. Plays a role in glucocorticoid-mediated down-regulation of the early phase of the inflammatory response. Contributes to the adaptive immune response by enhancing signaling cascades that are triggered by T-cell activation, regulates differentiation and proliferation of activated T-cells. Promotes the differentiation of T-cells into Th1 cells and negatively regulates differentiation into Th2 cells. Has no effect on unstimulated T-cells. Negatively regulates hormone exocytosis via activation of the formyl peptide receptors and reorganization of the actin cytoskeleton. Has high affinity for Ca(2+) and can bind up to eight Ca(2+) ions. Displays Ca(2+)-dependent binding to phospholipid membranes. Plays a role in the formation of phagocytic cups and phagosomes. Plays a role in phagocytosis by mediating the Ca(2+)-dependent interaction between phagosomes and the actin cytoskeleton. Functionally, functions at least in part by activating the formyl peptide receptors and downstream signaling cascades. Promotes chemotaxis of granulocytes and monocytes via activation of the formyl peptide receptors. Promotes rearrangement of the actin cytoskeleton, cell polarization and cell migration. Promotes resolution of inflammation and wound healing. Acts via neutrophil N-formyl peptide receptors to enhance the release of CXCL2. This chain is Annexin A1 (Anxa1), found in Rattus norvegicus (Rat).